Consider the following 133-residue polypeptide: Large ribosomal subunit protein uL15 (133 aa).

The tract at residues 1 to 64 (MGLENLKPAK…QPLQRRLPKI (64 aa)) is disordered.

The protein belongs to the universal ribosomal protein uL15 family. As to quaternary structure, part of the 50S ribosomal subunit.

Binds to the 23S rRNA. This is Large ribosomal subunit protein uL15 from Helicobacter pylori (strain J99 / ATCC 700824) (Campylobacter pylori J99).